Here is a 563-residue protein sequence, read N- to C-terminus: Membrane protein insertase YidC (563 aa).

A helical membrane pass occupies residues 6–26 (TVLWMIFSFSLLLLWNNWQIH). Positions 36–70 (PAPEAAATQQPKADANGTAASSTASIPSSPAAAPA) are disordered. A compositionally biased stretch (low complexity) spans 54-70 (AASSTASIPSSPAAAPA). A run of 4 helical transmembrane segments spans residues 373–393 (WGWTIVALTVIIKAVFFPLAA), 443–463 (LPMVVQIPVFIALYWVLLASV), 482–502 (PFFILPAIMMATMFLQIKLNP), and 512–532 (VMMIMPLVFGGMMFFFPAGLV).

The protein belongs to the OXA1/ALB3/YidC family. Type 1 subfamily. As to quaternary structure, interacts with the Sec translocase complex via SecD. Specifically interacts with transmembrane segments of nascent integral membrane proteins during membrane integration.

It is found in the cell membrane. Its function is as follows. Required for the insertion and/or proper folding and/or complex formation of integral membrane proteins into the membrane. Involved in integration of membrane proteins that insert both dependently and independently of the Sec translocase complex, as well as at least some lipoproteins. Aids folding of multispanning membrane proteins. The polypeptide is Membrane protein insertase YidC (Bordetella bronchiseptica (strain ATCC BAA-588 / NCTC 13252 / RB50) (Alcaligenes bronchisepticus)).